Here is a 147-residue protein sequence, read N- to C-terminus: Leech anti-platelet protein (147 aa).

The N-terminal stretch at 1–21 is a signal peptide; the sequence is MNSFLFSLACSLLVAIPAISA. The interval 21 to 71 is disordered; sequence AQDEDAGGAGDETSEGEDTTGSDETPSTGGGGDGGNEETITAGNEDCWSKR. The span at 22 to 41 shows a compositional bias: acidic residues; sequence QDEDAGGAGDETSEGEDTTG. 3 disulfide bridges follow: Cys-67–Cys-145, Cys-92–Cys-117, and Cys-96–Cys-105.

In terms of processing, the N-terminus is blocked. Expressed by salivary glands.

It localises to the secreted. Functionally, inhibits collagen-stimulated platelet aggregation (IC(50)=60 nM), dense granule release and serotonin release. Does not inhibit platelet aggregation induced by ADP, arachidonic acid, and thrombin. The sequence is that of Leech anti-platelet protein from Haementeria officinalis (Mexican leech).